Here is a 371-residue protein sequence, read N- to C-terminus: 4-hydroxy-3-methylbut-2-en-1-yl diphosphate synthase (flavodoxin) (371 aa).

The [4Fe-4S] cluster site is built by Cys270, Cys273, Cys305, and Glu312.

Belongs to the IspG family. Requires [4Fe-4S] cluster as cofactor.

It catalyses the reaction (2E)-4-hydroxy-3-methylbut-2-enyl diphosphate + oxidized [flavodoxin] + H2O + 2 H(+) = 2-C-methyl-D-erythritol 2,4-cyclic diphosphate + reduced [flavodoxin]. It functions in the pathway isoprenoid biosynthesis; isopentenyl diphosphate biosynthesis via DXP pathway; isopentenyl diphosphate from 1-deoxy-D-xylulose 5-phosphate: step 5/6. Its function is as follows. Converts 2C-methyl-D-erythritol 2,4-cyclodiphosphate (ME-2,4cPP) into 1-hydroxy-2-methyl-2-(E)-butenyl 4-diphosphate. This chain is 4-hydroxy-3-methylbut-2-en-1-yl diphosphate synthase (flavodoxin), found in Shewanella piezotolerans (strain WP3 / JCM 13877).